Here is an 89-residue protein sequence, read N- to C-terminus: RNA-binding protein Hfq (89 aa).

The 60-residue stretch at 14 to 73 (DPYLNALRKEKINVAIYLVNGVKLQGRVDSFDQFVVLLRSNVTQMVYKHAISTIVPARDP) folds into the Sm domain.

This sequence belongs to the Hfq family. In terms of assembly, homohexamer.

In terms of biological role, RNA chaperone that binds small regulatory RNA (sRNAs) and mRNAs to facilitate mRNA translational regulation in response to envelope stress, environmental stress and changes in metabolite concentrations. Also binds with high specificity to tRNAs. In Hydrogenovibrio crunogenus (strain DSM 25203 / XCL-2) (Thiomicrospira crunogena), this protein is RNA-binding protein Hfq.